We begin with the raw amino-acid sequence, 36 residues long: Photosystem I reaction center subunit VIII (36 aa).

A helical membrane pass occupies residues 8–28 (SVLVPLVGLVFPAIAMASLFL).

Belongs to the PsaI family.

It is found in the plastid. Its subcellular location is the chloroplast thylakoid membrane. Its function is as follows. May help in the organization of the PsaL subunit. In Helianthus annuus (Common sunflower), this protein is Photosystem I reaction center subunit VIII.